We begin with the raw amino-acid sequence, 224 residues long: 7-cyano-7-deazaguanine synthase (224 aa).

ATP is bound at residue 8–18; sequence VSGGADSATVL. Zn(2+) is bound by residues cysteine 189, cysteine 199, cysteine 202, and cysteine 205.

It belongs to the QueC family. Zn(2+) is required as a cofactor.

It carries out the reaction 7-carboxy-7-deazaguanine + NH4(+) + ATP = 7-cyano-7-deazaguanine + ADP + phosphate + H2O + H(+). Its pathway is purine metabolism; 7-cyano-7-deazaguanine biosynthesis. Catalyzes the ATP-dependent conversion of 7-carboxy-7-deazaguanine (CDG) to 7-cyano-7-deazaguanine (preQ(0)). The protein is 7-cyano-7-deazaguanine synthase of Rickettsia felis (strain ATCC VR-1525 / URRWXCal2) (Rickettsia azadi).